A 543-amino-acid polypeptide reads, in one-letter code: Cytochrome P450 1B1 (543 aa).

C470 provides a ligand contact to heme.

Belongs to the cytochrome P450 family. The cofactor is heme. Constitutively expressed in retinal and kidney pericytes cells. Expressed in retinal endothelial cells (at protein level). Expressed in cardiac, pulmonary and aortic endothelial cells. Constitutively expressed in trabecular meshwork of the eye (at protein level).

The protein localises to the endoplasmic reticulum membrane. Its subcellular location is the microsome membrane. The protein resides in the mitochondrion. The enzyme catalyses an organic molecule + reduced [NADPH--hemoprotein reductase] + O2 = an alcohol + oxidized [NADPH--hemoprotein reductase] + H2O + H(+). It catalyses the reaction 17beta-estradiol + reduced [NADPH--hemoprotein reductase] + O2 = 2-hydroxy-17beta-estradiol + oxidized [NADPH--hemoprotein reductase] + H2O + H(+). It carries out the reaction 17beta-estradiol + reduced [NADPH--hemoprotein reductase] + O2 = 4-hydroxy-17beta-estradiol + oxidized [NADPH--hemoprotein reductase] + H2O + H(+). The catalysed reaction is estrone + reduced [NADPH--hemoprotein reductase] + O2 = 2-hydroxyestrone + oxidized [NADPH--hemoprotein reductase] + H2O + H(+). The enzyme catalyses estrone + reduced [NADPH--hemoprotein reductase] + O2 = 4-hydroxyestrone + oxidized [NADPH--hemoprotein reductase] + H2O + H(+). It catalyses the reaction testosterone + reduced [NADPH--hemoprotein reductase] + O2 = 6beta,17beta-dihydroxyandrost-4-en-3-one + oxidized [NADPH--hemoprotein reductase] + H2O + H(+). It carries out the reaction progesterone + reduced [NADPH--hemoprotein reductase] + O2 = 6beta-hydroxyprogesterone + oxidized [NADPH--hemoprotein reductase] + H2O + H(+). The catalysed reaction is progesterone + reduced [NADPH--hemoprotein reductase] + O2 = 16alpha-hydroxyprogesterone + oxidized [NADPH--hemoprotein reductase] + H2O + H(+). The enzyme catalyses all-trans-retinol + reduced [NADPH--hemoprotein reductase] + O2 = all-trans-retinal + oxidized [NADPH--hemoprotein reductase] + 2 H2O + H(+). It catalyses the reaction all-trans-retinal + reduced [NADPH--hemoprotein reductase] + O2 = all-trans-retinoate + oxidized [NADPH--hemoprotein reductase] + H2O + 2 H(+). It carries out the reaction (5Z,8Z,11Z,14Z)-eicosatetraenoate + reduced [NADPH--hemoprotein reductase] + O2 = (8R,9S)-epoxy-(5Z,11Z,14Z)-eicosatrienoate + oxidized [NADPH--hemoprotein reductase] + H2O + H(+). The catalysed reaction is (5Z,8Z,11Z,14Z)-eicosatetraenoate + reduced [NADPH--hemoprotein reductase] + O2 = (11R,12S)-epoxy-(5Z,8Z,14Z)-eicosatrienoate + oxidized [NADPH--hemoprotein reductase] + H2O + H(+). The enzyme catalyses (5Z,8Z,11Z,14Z)-eicosatetraenoate + reduced [NADPH--hemoprotein reductase] + O2 = (11S,12R)-epoxy-(5Z,8Z,14Z)-eicosatrienoate + oxidized [NADPH--hemoprotein reductase] + H2O + H(+). It catalyses the reaction (5Z,8Z,11Z,14Z)-eicosatetraenoate + reduced [NADPH--hemoprotein reductase] + O2 = (14R,15S)-epoxy-(5Z,8Z,11Z)-eicosatrienoate + oxidized [NADPH--hemoprotein reductase] + H2O + H(+). It carries out the reaction (5S)-hydroperoxy-(6E,8Z,11Z,14Z)-eicosatetraenoate = 5-oxo-(6E,8Z,11Z,14Z)-eicosatetraenoate + H2O. The catalysed reaction is (12S)-hydroperoxy-(5Z,8Z,10E,14Z)-eicosatetraenoate = 12-oxo-(5Z,8Z,10E,14Z)-eicosatetraenoate + H2O. The enzyme catalyses (13S)-hydroperoxy-(9Z,11E)-octadecadienoate = 13-oxo-(9Z,11E)-octadecadienoate + H2O. It catalyses the reaction (15S)-hydroperoxy-(5Z,8Z,11Z,13E)-eicosatetraenoate = 15-oxo-(5Z,8Z,11Z,13E)-eicosatetraenoate + H2O. The protein operates within steroid hormone biosynthesis. It participates in cofactor metabolism; retinol metabolism. Its pathway is lipid metabolism; arachidonate metabolism. With respect to regulation, enzyme activity is increased by cytochrome b5. Enzyme activity is increased by liposomes containing anionic phospholipids, phosphatidic acid and cardiolipin. Inhibited by naringenin with an IC(50) of 5 uM. A cytochrome P450 monooxygenase involved in the metabolism of various endogenous substrates, including fatty acids, steroid hormones and vitamins. Mechanistically, uses molecular oxygen inserting one oxygen atom into a substrate, and reducing the second into a water molecule, with two electrons provided by NADPH via cytochrome P450 reductase (NADPH--hemoprotein reductase). Exhibits catalytic activity for the formation of hydroxyestrogens from 17beta-estradiol (E2), namely 2- and 4-hydroxy E2. Metabolizes testosterone and progesterone to B or D ring hydroxylated metabolites. May act as a major enzyme for all-trans retinoic acid biosynthesis in extrahepatic tissues. Catalyzes two successive oxidative transformation of all-trans retinol to all-trans retinal and then to the active form all-trans retinoic acid. Catalyzes the epoxidation of double bonds of certain PUFA. Converts arachidonic acid toward epoxyeicosatrienoic acid (EpETrE) regioisomers, 8,9-, 11,12-, and 14,15- EpETrE, that function as lipid mediators in the vascular system. Additionally, displays dehydratase activity toward oxygenated eicosanoids hydroperoxyeicosatetraenoates (HpETEs). This activity is independent of cytochrome P450 reductase, NADPH, and O2. Also involved in the oxidative metabolism of xenobiotics, particularly converting polycyclic aromatic hydrocarbons and heterocyclic aryl amines procarcinogens to DNA-damaging products. Plays an important role in retinal vascular development. Under ambient/hyperoxic O2 conditions, promotes angiogenesis and capillary morphogenesis of retinal endothelial cells and pericytes, likely by metabolizing the oxygenated products symptomatic of oxidative stress. Also, contributes to oxidative homeostasis and ultrastructural organization and function of trabecular meshwork tissue through modulation of POSTN expression. The polypeptide is Cytochrome P450 1B1 (Mus musculus (Mouse)).